We begin with the raw amino-acid sequence, 338 residues long: Lumican (338 aa).

The first 18 residues, 1 to 18 (MNVCTFTLVLALVGSVSG), serve as a signal peptide directing secretion. The residue at position 19 (Gln-19) is a Pyrrolidone carboxylic acid. Sulfotyrosine is present on residues Tyr-20, Tyr-21, Tyr-23, and Tyr-30. An LRRNT domain is found at 28–66 (FMYGELSPNCAPECNCPHSYPTAMYCDDLKLKSVPMVPP). LRR repeat units follow at residues 67-88 (GIKYLYLRNNQIDHIDEKAFEN), 91-114 (DLQWLILDHNLLENSKIKGKVFSK), 117-137 (QLKKLHINYNNLTESVGPLPK), 138-159 (SLQDLQLANNKISKLGSFDGLV), 160-181 (NLTFIYLQHNQLKEEAVSASLK), 185-205 (SLEYLDLSFNQMSKLPAGLPT), 206-227 (SLLTLYLDNNKITNIPDEYFNR), and 230-250 (GLQYLRLSHNELADSGVPGNS). An N-linked (GlcNAc...) (keratan sulfate) asparagine glycan is attached at Asn-88. The N-linked (GlcNAc...) (keratan sulfate) asparagine glycan is linked to Asn-127. Residue Asn-160 is glycosylated (N-linked (GlcNAc...) (keratan sulfate) asparagine). A glycan (N-linked (GlcNAc...) (keratan sulfate) asparagine) is linked at Asn-252. 2 LRR repeats span residues 255–276 (SLLELDLSYNKLKSIPTVNENL) and 277–296 (ENYYLEVNKLEKFDVKSFCK). A disulfide bridge connects residues Cys-295 and Cys-328. Residue Ser-304 is modified to Phosphoserine. An LRR 11 repeat occupies 305-326 (KIKHLRLDGNPLTQSSLPPDMY).

It belongs to the small leucine-rich proteoglycan (SLRP) family. SLRP class II subfamily. As to quaternary structure, binds to laminin. In terms of processing, contains keratan sulfate.

It is found in the secreted. The protein localises to the extracellular space. Its subcellular location is the extracellular matrix. The sequence is that of Lumican (Lum) from Rattus norvegicus (Rat).